We begin with the raw amino-acid sequence, 120 residues long: Alpha-amylase inhibitor Haim-2 (120 aa).

An N-terminal signal peptide occupies residues Met-1–Glu-32. Intrachain disulfides connect Cys-43/Cys-59 and Cys-77/Cys-104.

Functionally, inhibits mammalian alpha-amylases specifically but has no action on plant and microbial alpha-amylases. This Streptomyces griseosporeus protein is Alpha-amylase inhibitor Haim-2.